Consider the following 1880-residue polypeptide: Gag-Pro-Pol polyprotein (1880 aa).

Residue glycine 2 is the site of N-myristoyl glycine; by host attachment. Disordered regions lie at residues 115–208, 323–376, and 446–469; these read HSRP…DQLN, SQGQ…THSY, and AERT…SPYQ. 3 stretches are compositionally biased toward polar residues: residues 117-132, 193-206, and 323-334; these read RPPS…TSEK, NSKT…QDDQ, and SQGQVSSNTTGR. Residues 346–366 show a composition bias toward acidic residues; the sequence is EEEEADSGESDSEDDEEESSE. The segment covering 446-459 has biased composition (basic and acidic residues); it reads AERTRVRPPPKDGP. The Peptidase A2 domain occupies 863-939; it reads FSGILDTGAD…LPVNLWGRDI (77 aa). Catalysis depends on aspartate 868, which acts as the Protease; shared with dimeric partner. The G-patch domain maps to 950-996; the sequence is PNDTVMTQMLSQGYLPGQGLGKNNQGITQPITITPKKDKTGLGFHQN. The Reverse transcriptase domain maps to 1044–1232; it reads LAAGHIEPTN…EPFSYLGFEL (189 aa). Mg(2+) is bound by residues aspartate 1109, aspartate 1184, aspartate 1185, aspartate 1464, glutamate 1493, aspartate 1514, and aspartate 1578. Residues 1455–1586 enclose the RNase H type-1 domain; sequence IPQATLVFTD…ADAATQIFPI (132 aa). The Integrase-type zinc-finger motif lies at 1589 to 1630; it reads DPIHEATQAHTLHHLNAHTLRLLYKITREQARDIVKACKQCV. Histidine 1598, histidine 1602, cysteine 1626, and cysteine 1629 together coordinate Zn(2+). One can recognise an Integrase catalytic domain in the interval 1643-1804; the sequence is RGLVPNAIWQ…AADRLWHPQT (162 aa). Residues aspartate 1654, aspartate 1711, and glutamate 1747 each contribute to the Mg(2+) site. Positions 1809–1858 form a DNA-binding region, integrase-type; sequence ATVMWRDPLTSVWKGPDPVLIWGRGSACIYDQKEDGPRWLPERLIRHINN. A disordered region spans residues 1859 to 1880; the sequence is QTAPLCDRPSNPNTAPGPKGSP.

As to quaternary structure, homodimer. Interacts with the G-patch peptide. In terms of assembly, interacts with the reverse transcriptase/ribonuclease H. As to quaternary structure, homotrimer. Mg(2+) serves as cofactor. Post-translationally, myristoylated. Myristoylation of the matrix (MA) domain mediates the transport and binding of Gag polyproteins to the host plasma membrane and is required for the assembly of viral particles. In terms of processing, specific enzymatic cleavages in vivo yield mature proteins. Released by autocatalytic processing. The protease can undergo further autoprocessing to yield 2 shorter but enzymatically active forms of 12 kDa and 13 kDa.

It is found in the virion. The catalysed reaction is DNA(n) + a 2'-deoxyribonucleoside 5'-triphosphate = DNA(n+1) + diphosphate. The enzyme catalyses Endonucleolytic cleavage to 5'-phosphomonoester.. It carries out the reaction dUTP + H2O = dUMP + diphosphate + H(+). Matrix protein. In terms of biological role, capsid protein. Functionally, matrix protein p10: Matrix protein. Its function is as follows. Nucleocapsid protein p14: Nucleocapsid protein. Capsid protein p27: capsid protein. In terms of biological role, the aspartyl protease mediates proteolytic cleavages of Gag and Gag-Pol polyproteins during or shortly after the release of the virion from the plasma membrane. Cleavages take place as an ordered, step-wise cascade to yield mature proteins. This process is called maturation. Displays maximal activity during the budding process just prior to particle release from the cell. Functionally, enhances the activity of the reverse transcriptase. May be part of the mature RT. Its function is as follows. RT is a multifunctional enzyme that converts the viral dimeric RNA genome into dsDNA in the cytoplasm, shortly after virus entry into the cell. This enzyme displays a DNA polymerase activity that can copy either DNA or RNA templates, and a ribonuclease H (RNase H) activity that cleaves the RNA strand of RNA-DNA heteroduplexes in a partially processive 3' to 5' endonucleasic mode. Conversion of viral genomic RNA into dsDNA requires many steps. A tRNA binds to the primer-binding site (PBS) situated at the 5' end of the viral RNA. RT uses the 3' end of the tRNA primer to perfom a short round of RNA-dependent minus-strand DNA synthesis. The reading proceeds through the U5 region and ends after the repeated (R) region which is present at both ends of viral RNA. The portion of the RNA-DNA heteroduplex is digested by the RNase H, resulting in a ssDNA product attached to the tRNA primer. This ssDNA/tRNA hybridizes with the identical R region situated at the 3' end of viral RNA. This template exchange, known as minus-strand DNA strong stop transfer, can be either intra- or intermolecular. RT uses the 3' end of this newly synthesized short ssDNA to perfom the RNA-dependent minus-strand DNA synthesis of the whole template. RNase H digests the RNA template except for a polypurine tract (PPT) situated at the 5' end of the genome. It is not clear if both polymerase and RNase H activities are simultaneous. RNase H probably can proceed both in a polymerase-dependent (RNA cut into small fragments by the same RT performing DNA synthesis) and a polymerase-independent mode (cleavage of remaining RNA fragments by free RTs). Secondly, RT performs DNA-directed plus-strand DNA synthesis using the PPT that has not been removed by RNase H as primers. PPT and tRNA primers are then removed by RNase H. The 3' and 5' ssDNA PBS regions hybridize to form a circular dsDNA intermediate. Strand displacement synthesis by RT to the PBS and PPT ends produces a blunt ended, linear dsDNA copy of the viral genome that includes long terminal repeats (LTRs) at both ends. Catalyzes viral DNA integration into the host chromosome, by performing a series of DNA cutting and joining reactions. In Mammalia (SMRV-H), this protein is Gag-Pro-Pol polyprotein (pol).